A 173-amino-acid chain; its full sequence is Alpha-crystallin A chain (173 aa).

The residue at position 1 (Met1) is an N-acetylmethionine. The segment at 1–63 (MDIAIQHPWF…RSVLDSGVSE (63 aa)) is required for complex formation with BFSP1 and BFSP2. Gln6 carries the post-translational modification Deamidated glutamine; partial. Ser45 is subject to Phosphoserine. A Deamidated glutamine; partial modification is found at Gln50. The sHSP domain maps to 52-162 (LFRSVLDSGV…GHSERAIPVS (111 aa)). Lys70 bears the N6-acetyllysine mark. Gln90 carries the post-translational modification Deamidated glutamine; partial. Position 99 is an N6-acetyllysine (Lys99). His100 is a binding site for Zn(2+). Asn101 bears the Deamidated asparagine; partial mark. Residues Glu102 and His107 each coordinate Zn(2+). A Phosphoserine modification is found at Ser122. Asn123 carries the post-translational modification Deamidated asparagine; partial. The segment at 144–173 (PKIPSGMDAGHSERAIPVSREEKPSSAPSS) is disordered. Basic and acidic residues predominate over residues 153–167 (GHSERAIPVSREEKP). Residue His154 coordinates Zn(2+). Ser162 carries O-linked (GlcNAc) serine glycosylation.

The protein belongs to the small heat shock protein (HSP20) family. As to quaternary structure, heteromer composed of three CRYAA and one CRYAB subunits. Inter-subunit bridging via zinc ions enhances stability, which is crucial as there is no protein turn over in the lens. Can also form homodimers and homotetramers (dimers of dimers) which serve as the building blocks of homooligomers. Within homooligomers, the zinc-binding motif is created from residues of 3 different molecules. His-100 and Glu-102 from one molecule are ligands of the zinc ion, and His-107 and His-154 residues from additional molecules complete the site with tetrahedral coordination geometry. Part of a complex required for lens intermediate filament formation composed of BFSP1, BFSP2 and CRYAA. In terms of processing, acetylation at Lys-70 may increase chaperone activity. Undergoes age-dependent proteolytical cleavage at the C-terminus.

It is found in the cytoplasm. The protein resides in the nucleus. Functionally, contributes to the transparency and refractive index of the lens. Acts as a chaperone, preventing aggregation of various proteins under a wide range of stress conditions. Required for the correct formation of lens intermediate filaments as part of a complex composed of BFSP1, BFSP2 and CRYAA. The protein is Alpha-crystallin A chain (CRYAA) of Ceratotherium simum (White rhinoceros).